Here is a 557-residue protein sequence, read N- to C-terminus: Dihydroxy-acid dehydratase (557 aa).

Asp78 lines the Mg(2+) pocket. A [2Fe-2S] cluster-binding site is contributed by Cys119. Positions 120 and 121 each coordinate Mg(2+). Lys121 is subject to N6-carboxylysine. A [2Fe-2S] cluster-binding site is contributed by Cys191. Glu442 is a Mg(2+) binding site. Ser468 serves as the catalytic Proton acceptor.

Belongs to the IlvD/Edd family. In terms of assembly, homodimer. It depends on [2Fe-2S] cluster as a cofactor. Mg(2+) is required as a cofactor.

The catalysed reaction is (2R)-2,3-dihydroxy-3-methylbutanoate = 3-methyl-2-oxobutanoate + H2O. The enzyme catalyses (2R,3R)-2,3-dihydroxy-3-methylpentanoate = (S)-3-methyl-2-oxopentanoate + H2O. The protein operates within amino-acid biosynthesis; L-isoleucine biosynthesis; L-isoleucine from 2-oxobutanoate: step 3/4. Its pathway is amino-acid biosynthesis; L-valine biosynthesis; L-valine from pyruvate: step 3/4. Its function is as follows. Functions in the biosynthesis of branched-chain amino acids. Catalyzes the dehydration of (2R,3R)-2,3-dihydroxy-3-methylpentanoate (2,3-dihydroxy-3-methylvalerate) into 2-oxo-3-methylpentanoate (2-oxo-3-methylvalerate) and of (2R)-2,3-dihydroxy-3-methylbutanoate (2,3-dihydroxyisovalerate) into 2-oxo-3-methylbutanoate (2-oxoisovalerate), the penultimate precursor to L-isoleucine and L-valine, respectively. The sequence is that of Dihydroxy-acid dehydratase from Lachnospira eligens (strain ATCC 27750 / DSM 3376 / VPI C15-48 / C15-B4) (Eubacterium eligens).